The following is a 49-amino-acid chain: Large ribosomal subunit protein bL33C (49 aa).

Positions 20 to 49 (NKNKRNNPDRLEKQKYCPRERKVTLHRETK) are disordered. Over residues 25–49 (NNPDRLEKQKYCPRERKVTLHRETK) the composition is skewed to basic and acidic residues.

It belongs to the bacterial ribosomal protein bL33 family.

This is Large ribosomal subunit protein bL33C (rpmG3) from Enterococcus faecalis (strain ATCC 700802 / V583).